The chain runs to 166 residues: CDP-archaeol synthase (166 aa).

A run of 4 helical transmembrane segments spans residues 42–62 (FFGG…AATA), 73–93 (FLSV…KSFL), 104–124 (SWFL…ILIF), and 128–148 (WLFG…TPLL).

It belongs to the CDP-archaeol synthase family. Mg(2+) serves as cofactor.

It localises to the cell membrane. The enzyme catalyses 2,3-bis-O-(geranylgeranyl)-sn-glycerol 1-phosphate + CTP + H(+) = CDP-2,3-bis-O-(geranylgeranyl)-sn-glycerol + diphosphate. It participates in membrane lipid metabolism; glycerophospholipid metabolism. In terms of biological role, catalyzes the formation of CDP-2,3-bis-(O-geranylgeranyl)-sn-glycerol (CDP-archaeol) from 2,3-bis-(O-geranylgeranyl)-sn-glycerol 1-phosphate (DGGGP) and CTP. This reaction is the third ether-bond-formation step in the biosynthesis of archaeal membrane lipids. This Methanoculleus marisnigri (strain ATCC 35101 / DSM 1498 / JR1) protein is CDP-archaeol synthase.